Here is a 308-residue protein sequence, read N- to C-terminus: Transaldolase (308 aa).

Residue lysine 125 is the Schiff-base intermediate with substrate of the active site.

It belongs to the transaldolase family. Type 1 subfamily. As to quaternary structure, homodimer.

The protein localises to the cytoplasm. The enzyme catalyses D-sedoheptulose 7-phosphate + D-glyceraldehyde 3-phosphate = D-erythrose 4-phosphate + beta-D-fructose 6-phosphate. The protein operates within carbohydrate degradation; pentose phosphate pathway; D-glyceraldehyde 3-phosphate and beta-D-fructose 6-phosphate from D-ribose 5-phosphate and D-xylulose 5-phosphate (non-oxidative stage): step 2/3. Functionally, transaldolase is important for the balance of metabolites in the pentose-phosphate pathway. The polypeptide is Transaldolase (Ectopseudomonas mendocina (strain ymp) (Pseudomonas mendocina)).